A 463-amino-acid polypeptide reads, in one-letter code: Phosphoglucosamine mutase (463 aa).

The active-site Phosphoserine intermediate is S110. Mg(2+)-binding residues include S110, D255, D257, and D259. S110 is modified (phosphoserine).

This sequence belongs to the phosphohexose mutase family. Mg(2+) serves as cofactor. In terms of processing, activated by phosphorylation.

It carries out the reaction alpha-D-glucosamine 1-phosphate = D-glucosamine 6-phosphate. In terms of biological role, catalyzes the conversion of glucosamine-6-phosphate to glucosamine-1-phosphate. The polypeptide is Phosphoglucosamine mutase (Koribacter versatilis (strain Ellin345)).